Reading from the N-terminus, the 292-residue chain is Transmembrane and ubiquitin-like domain-containing protein 1 (292 aa).

Residues 11 to 31 (VTLLFGVVFLVLVLVLAWAST) traverse the membrane as a helical segment. The tract at residues 34–143 (VEPPEHLLSP…TQPSAEDAAS (110 aa)) is disordered. A compositionally biased stretch (basic and acidic residues) spans 71–80 (VRDEDDKSEP). The span at 84-94 (AGAAGQSADGS) shows a compositional bias: low complexity. The 74-residue stretch at 149–222 (MVLRLKFLND…LHCHISQHAT (74 aa)) folds into the Ubiquitin-like domain. The next 2 helical transmembrane spans lie at 237 to 257 (VALN…SVLW) and 269 to 289 (APAT…AFGV).

Its subcellular location is the membrane. It localises to the cytoplasm. It is found in the nucleus. Functionally, may contribute to the regulation of translation during cell-cycle progression. May contribute to the regulation of cell proliferation. The membrane form is involved in sterol-regulated ubiquitination and degradation of HMG-CoA reductase HMGCR. May be involved in centrosome assembly. The sequence is that of Transmembrane and ubiquitin-like domain-containing protein 1 (tmub1) from Danio rerio (Zebrafish).